Reading from the N-terminus, the 203-residue chain is Proteasome subunit beta 2 (203 aa).

Residues 1–9 (MGEEVQIGA) constitute a propeptide, removed in mature form; by autocatalysis. The active-site Nucleophile is Thr10.

The protein belongs to the peptidase T1B family. The 20S proteasome core is composed of 14 alpha and 14 beta subunits that assemble into four stacked heptameric rings, resulting in a barrel-shaped structure. The two inner rings, each composed of seven catalytic beta subunits, are sandwiched by two outer rings, each composed of seven alpha subunits. The catalytic chamber with the active sites is on the inside of the barrel. Has a gated structure, the ends of the cylinder being occluded by the N-termini of the alpha-subunits. Is capped at one or both ends by the proteasome regulatory ATPase, PAN.

Its subcellular location is the cytoplasm. The catalysed reaction is Cleavage of peptide bonds with very broad specificity.. With respect to regulation, the formation of the proteasomal ATPase PAN-20S proteasome complex, via the docking of the C-termini of PAN into the intersubunit pockets in the alpha-rings, triggers opening of the gate for substrate entry. Interconversion between the open-gate and close-gate conformations leads to a dynamic regulation of the 20S proteasome proteolysis activity. Functionally, component of the proteasome core, a large protease complex with broad specificity involved in protein degradation. This is Proteasome subunit beta 2 from Pyrobaculum arsenaticum (strain DSM 13514 / JCM 11321 / PZ6).